A 396-amino-acid chain; its full sequence is NADH-quinone oxidoreductase subunit D (396 aa).

Belongs to the complex I 49 kDa subunit family. NDH-1 is composed of 14 different subunits. Subunits NuoB, C, D, E, F, and G constitute the peripheral sector of the complex.

The protein resides in the cell inner membrane. The catalysed reaction is a quinone + NADH + 5 H(+)(in) = a quinol + NAD(+) + 4 H(+)(out). In terms of biological role, NDH-1 shuttles electrons from NADH, via FMN and iron-sulfur (Fe-S) centers, to quinones in the respiratory chain. The immediate electron acceptor for the enzyme in this species is believed to be ubiquinone. Couples the redox reaction to proton translocation (for every two electrons transferred, four hydrogen ions are translocated across the cytoplasmic membrane), and thus conserves the redox energy in a proton gradient. In Brucella melitensis biotype 1 (strain ATCC 23456 / CCUG 17765 / NCTC 10094 / 16M), this protein is NADH-quinone oxidoreductase subunit D.